The following is a 367-amino-acid chain: tRNA-specific 2-thiouridylase MnmA (367 aa).

Residues 9 to 16 (GLSGGVDS) and Met35 contribute to the ATP site. The segment at 95–97 (NPD) is interaction with target base in tRNA. Residue Cys100 is the Nucleophile of the active site. Cys100 and Cys196 are disulfide-bonded. Gly124 contributes to the ATP binding site. The tract at residues 146–148 (KDQ) is interaction with tRNA. The active-site Cysteine persulfide intermediate is Cys196. The interaction with tRNA stretch occupies residues 308-309 (RY).

Belongs to the MnmA/TRMU family.

It is found in the cytoplasm. It carries out the reaction S-sulfanyl-L-cysteinyl-[protein] + uridine(34) in tRNA + AH2 + ATP = 2-thiouridine(34) in tRNA + L-cysteinyl-[protein] + A + AMP + diphosphate + H(+). Catalyzes the 2-thiolation of uridine at the wobble position (U34) of tRNA, leading to the formation of s(2)U34. This chain is tRNA-specific 2-thiouridylase MnmA, found in Nitrosococcus oceani (strain ATCC 19707 / BCRC 17464 / JCM 30415 / NCIMB 11848 / C-107).